Reading from the N-terminus, the 558-residue chain is Delta-1-pyrroline-5-carboxylate dehydrogenase, mitochondrial (558 aa).

Residues Ser198, Lys223, and 276 to 280 each bind NAD(+); that span reads GSTGV. The active-site Proton acceptor is Glu306. The active-site Nucleophile is the Cys340. Glu438 is a binding site for NAD(+).

Belongs to the aldehyde dehydrogenase family.

The protein localises to the mitochondrion matrix. It carries out the reaction L-glutamate 5-semialdehyde + NAD(+) + H2O = L-glutamate + NADH + 2 H(+). The protein operates within amino-acid degradation; L-proline degradation into L-glutamate; L-glutamate from L-proline: step 2/2. Its function is as follows. Irreversible conversion of delta-1-pyrroline-5-carboxylate (P5C), derived either from proline or ornithine, to glutamate. This is a necessary step in the pathway interconnecting the urea and tricarboxylic acid cycles. The protein is Delta-1-pyrroline-5-carboxylate dehydrogenase, mitochondrial of Dictyostelium discoideum (Social amoeba).